Consider the following 57-residue polypeptide: DNA gyrase inhibitor YacG (57 aa).

The Zn(2+) site is built by Cys-5, Cys-8, Cys-20, and Cys-24.

This sequence belongs to the DNA gyrase inhibitor YacG family. Interacts with GyrB. It depends on Zn(2+) as a cofactor.

In terms of biological role, inhibits all the catalytic activities of DNA gyrase by preventing its interaction with DNA. Acts by binding directly to the C-terminal domain of GyrB, which probably disrupts DNA binding by the gyrase. The chain is DNA gyrase inhibitor YacG from Caulobacter vibrioides (strain ATCC 19089 / CIP 103742 / CB 15) (Caulobacter crescentus).